Reading from the N-terminus, the 534-residue chain is Inorganic phosphate transporter 1-6 (534 aa).

The Cytoplasmic portion of the chain corresponds to 1–29 (MGGGGGEQQQLEVLHALDVAKTQWYHFTA). The chain crosses the membrane as a helical span at residues 30 to 50 (IVVAGMGFFTDAYDLFCISLV). The Extracellular portion of the chain corresponds to 51-75 (TKLLGRIYYRVDGSPSPGTLPPHVS). Residues 76-96 (ASVNGVAFVGTLSGQLFFGWL) traverse the membrane as a helical segment. Residues 97 to 104 (GDKLGRKR) lie on the Cytoplasmic side of the membrane. The chain crosses the membrane as a helical span at residues 105–125 (VYGITLMLMVLCSLASALSFG). Residues 126 to 127 (HT) are Extracellular-facing. A helical transmembrane segment spans residues 128-148 (PTSVMATLCFFRFWLGFGIGG). Topologically, residues 149 to 168 (DYPLSATIMSEYANKKTRGA) are cytoplasmic. Residues 169–189 (FIAAVFAMQGFGIITGGLVAI) traverse the membrane as a helical segment. At 190–216 (LVSASFRAAFPAPPYGEDPVASTPPQA) the chain is on the extracellular side. The helical transmembrane segment at 217–237 (DFVWRIILMLGALPAALTYYW) threads the bilayer. Over 238-294 (RTKMPETARYTALVANNAKQAAADMSKVLQVVEMRNIGNNGGSRRPFGLFSGEFVRR) the chain is Cytoplasmic. Residues 295 to 315 (HGLHLVGTSATWLLLDIAFYS) traverse the membrane as a helical segment. At 316–350 (QNLFQKDIFSAVGWIPKAATMSALEELFRIARAQT) the chain is on the extracellular side. The helical transmembrane segment at 351-371 (LIALCGTVPGYWFTVALIDVV) threads the bilayer. At 372–375 (GRFK) the chain is on the cytoplasmic side. A helical membrane pass occupies residues 376–396 (IQAVGFFMMTLFMLTLALPYH). Topologically, residues 397–405 (HWTAPGKNH) are extracellular. The chain crosses the membrane as a helical span at residues 406-426 (VGFLLLYGLTFFFANFGPNST). Topologically, residues 427–445 (TFIVPAEIFPARLRATCHG) are cytoplasmic. A helical membrane pass occupies residues 446 to 466 (ISAASGKLGAIVGSFGFLYLA). Topologically, residues 467–486 (QSPDRSKTEHGYPPGIGVRN) are extracellular. Residues 487-507 (SLFLLAACNLLGLLFTFLVPE) traverse the membrane as a helical segment. The Cytoplasmic segment spans residues 508 to 534 (SKGKSLEEMSGDAEAQEEAPPPLQTVL). The segment at 514-534 (EEMSGDAEAQEEAPPPLQTVL) is disordered.

It belongs to the major facilitator superfamily. Phosphate:H(+) symporter (TC 2.A.1.9) family. As to expression, highly expressed in leaves and at low levels in roots. Expressed in leaf xylem parenchyma cells.

The protein localises to the membrane. In terms of biological role, high-affinity transporter for external inorganic phosphate (Pi). Probably involved in Pi uptake, translocation and internal transport throughout the plant. The polypeptide is Inorganic phosphate transporter 1-6 (PHT1-6) (Oryza sativa subsp. japonica (Rice)).